A 546-amino-acid polypeptide reads, in one-letter code: Chaperonin GroEL (546 aa).

ATP contacts are provided by residues threonine 30–proline 33, lysine 51, aspartate 87–threonine 91, glycine 415, and aspartate 495.

It belongs to the chaperonin (HSP60) family. In terms of assembly, forms a cylinder of 14 subunits composed of two heptameric rings stacked back-to-back. Interacts with the co-chaperonin GroES.

The protein localises to the cytoplasm. It carries out the reaction ATP + H2O + a folded polypeptide = ADP + phosphate + an unfolded polypeptide.. Together with its co-chaperonin GroES, plays an essential role in assisting protein folding. The GroEL-GroES system forms a nano-cage that allows encapsulation of the non-native substrate proteins and provides a physical environment optimized to promote and accelerate protein folding. This is Chaperonin GroEL from Brucella ovis (strain ATCC 25840 / 63/290 / NCTC 10512).